The sequence spans 237 residues: 1-(5-phosphoribosyl)-5-[(5-phosphoribosylamino)methylideneamino] imidazole-4-carboxamide isomerase (237 aa).

Asp8 serves as the catalytic Proton acceptor. Asp129 serves as the catalytic Proton donor.

It belongs to the HisA/HisF family.

The protein resides in the cytoplasm. The enzyme catalyses 1-(5-phospho-beta-D-ribosyl)-5-[(5-phospho-beta-D-ribosylamino)methylideneamino]imidazole-4-carboxamide = 5-[(5-phospho-1-deoxy-D-ribulos-1-ylimino)methylamino]-1-(5-phospho-beta-D-ribosyl)imidazole-4-carboxamide. It participates in amino-acid biosynthesis; L-histidine biosynthesis; L-histidine from 5-phospho-alpha-D-ribose 1-diphosphate: step 4/9. This is 1-(5-phosphoribosyl)-5-[(5-phosphoribosylamino)methylideneamino] imidazole-4-carboxamide isomerase from Dehalococcoides mccartyi (strain ATCC BAA-2266 / KCTC 15142 / 195) (Dehalococcoides ethenogenes (strain 195)).